The sequence spans 138 residues: Ribulose bisphosphate carboxylase small subunit (138 aa).

The protein belongs to the RuBisCO small chain family. Heterohexadecamer of 8 large and 8 small subunits.

It localises to the plastid. Its subcellular location is the chloroplast. RuBisCO catalyzes two reactions: the carboxylation of D-ribulose 1,5-bisphosphate, the primary event in carbon dioxide fixation, as well as the oxidative fragmentation of the pentose substrate in the photorespiration process. Both reactions occur simultaneously and in competition at the same active site. Although the small subunit is not catalytic it is essential for maximal activity. In Antithamnion sp. (Red alga), this protein is Ribulose bisphosphate carboxylase small subunit.